The following is a 569-amino-acid chain: Hemin/hemoglobin-binding protein 2 (569 aa).

Positions 1-28 (MKKLWKKGLVAFLALTLIFQLIPGFASA) are cleaved as a signal peptide. NEAT domains follow at residues 34 to 173 (KDGG…FKVI), 184 to 307 (LSDG…ATAA), and 360 to 484 (LNNH…IKDI). Heme-binding positions include 204–205 (SS), Y280, and Y289. Residues 307–357 (ASSYPGSDETPPVVNPGETNPPVTKPDPGTTNPPVTTPPTTPSKPAVVDPK) form a disordered region. Residues 502-511 (TGNVASNNNA) show a composition bias toward polar residues. The disordered stretch occupies residues 502 to 537 (TGNVASNNNAGPKLAKPDFDDTNSVQKTASKTEKNA). Positions 536-540 (NAKTN) match the NXZTN sorting signal motif. Position 539 is a pentaglycyl murein peptidoglycan amidated threonine (T539). Residues 540–569 (NDSSSMVWYITLFGASFLYLAYRLKRKRLS) constitute a propeptide, removed by sortase B.

Its subcellular location is the cell surface. It is found in the secreted. The protein localises to the cell wall. Is overexpressed in mecA, clpC and clpP mutants, suggesting the protein level is controlled by MecA, ClpC and ClpP (at protein level). In terms of biological role, acts as an extracellular and cell wall-bound hemophore; scavenges host heme and hemoglobin from the environment and also serves as a cell wall receptor for both. At low hemin (Hn) and hemoglobin (Hb) concentrations adsorbs Hn/Hb and presumably directs it to membrane transporters. Soluble Hbp2 can probably pass Hn/Hb to cell wall-anchored Hbp2, and both forms can accept Hn/Hb from Hbp1. May be involved in crossing the digestive barrier in infected animals. Binds host hemin. Binds host hemoglobin with affinity in the nanomolar range. The sequence is that of Hemin/hemoglobin-binding protein 2 from Listeria monocytogenes serovar 1/2a (strain ATCC BAA-679 / EGD-e).